Reading from the N-terminus, the 275-residue chain is 4-diphosphocytidyl-2-C-methyl-D-erythritol kinase (275 aa).

Residue K14 is part of the active site. Residue 98-108 (PMGAGLGGGSS) coordinates ATP. D140 is an active-site residue.

The protein belongs to the GHMP kinase family. IspE subfamily.

It catalyses the reaction 4-CDP-2-C-methyl-D-erythritol + ATP = 4-CDP-2-C-methyl-D-erythritol 2-phosphate + ADP + H(+). It participates in isoprenoid biosynthesis; isopentenyl diphosphate biosynthesis via DXP pathway; isopentenyl diphosphate from 1-deoxy-D-xylulose 5-phosphate: step 3/6. Its function is as follows. Catalyzes the phosphorylation of the position 2 hydroxy group of 4-diphosphocytidyl-2C-methyl-D-erythritol. In Francisella tularensis subsp. tularensis (strain FSC 198), this protein is 4-diphosphocytidyl-2-C-methyl-D-erythritol kinase.